Here is a 474-residue protein sequence, read N- to C-terminus: ATP synthase subunit beta 1 (474 aa).

157–164 is a binding site for ATP; that stretch reads GGAGVGKT.

Belongs to the ATPase alpha/beta chains family. F-type ATPases have 2 components, CF(1) - the catalytic core - and CF(0) - the membrane proton channel. CF(1) has five subunits: alpha(3), beta(3), gamma(1), delta(1), epsilon(1). CF(0) has three main subunits: a(1), b(2) and c(9-12). The alpha and beta chains form an alternating ring which encloses part of the gamma chain. CF(1) is attached to CF(0) by a central stalk formed by the gamma and epsilon chains, while a peripheral stalk is formed by the delta and b chains.

It is found in the cell inner membrane. It catalyses the reaction ATP + H2O + 4 H(+)(in) = ADP + phosphate + 5 H(+)(out). In terms of biological role, produces ATP from ADP in the presence of a proton gradient across the membrane. The catalytic sites are hosted primarily by the beta subunits. The sequence is that of ATP synthase subunit beta 1 from Polaromonas naphthalenivorans (strain CJ2).